The sequence spans 108 residues: UPF0102 protein Shewana3_3881 (108 aa).

Belongs to the UPF0102 family.

This is UPF0102 protein Shewana3_3881 from Shewanella sp. (strain ANA-3).